A 2291-amino-acid polypeptide reads, in one-letter code: Protein Ycf2 A (2291 aa).

ATP is bound at residue Gly1642–Ser1649.

It belongs to the Ycf2 family.

It localises to the plastid. Its subcellular location is the chloroplast stroma. Functionally, probable ATPase of unknown function. Its presence in a non-photosynthetic plant (Epifagus virginiana) and experiments in tobacco indicate that it has an essential function which is probably not related to photosynthesis. The protein is Protein Ycf2 A (ycf2-A) of Atropa belladonna (Belladonna).